Reading from the N-terminus, the 119-residue chain is Large ribosomal subunit protein bL20 (119 aa).

Belongs to the bacterial ribosomal protein bL20 family.

Binds directly to 23S ribosomal RNA and is necessary for the in vitro assembly process of the 50S ribosomal subunit. It is not involved in the protein synthesizing functions of that subunit. This is Large ribosomal subunit protein bL20 from Xanthomonas oryzae pv. oryzae (strain PXO99A).